We begin with the raw amino-acid sequence, 334 residues long: F420-dependent glucose-6-phosphate dehydrogenase (334 aa).

Coenzyme F420-(gamma-Glu)n is bound at residue Asp-38. Residue His-39 is the Proton donor of the active site. Coenzyme F420-(gamma-Glu)n contacts are provided by residues Thr-75 and 106 to 107 (TG). Glu-108 functions as the Proton acceptor in the catalytic mechanism. Residues Asn-111, 175–176 (GG), and 178–179 (LV) each bind coenzyme F420-(gamma-Glu)n. 4 residues coordinate substrate: Thr-193, Lys-196, Lys-257, and Arg-281.

Belongs to the F420-dependent glucose-6-phosphate dehydrogenase family. In terms of assembly, homodimer.

It carries out the reaction oxidized coenzyme F420-(gamma-L-Glu)(n) + D-glucose 6-phosphate + H(+) = 6-phospho-D-glucono-1,5-lactone + reduced coenzyme F420-(gamma-L-Glu)(n). Catalyzes the coenzyme F420-dependent oxidation of glucose 6-phosphate (G6P) to 6-phosphogluconolactone. This is F420-dependent glucose-6-phosphate dehydrogenase from Kribbella flavida (strain DSM 17836 / JCM 10339 / NBRC 14399).